Reading from the N-terminus, the 346-residue chain is Large ribosomal subunit protein uL1c (346 aa).

Residues 1–70 (MAACATHSSL…RASNHKFIVS (70 aa)) constitute a chloroplast transit peptide. Tyrosine 129 bears the Phosphotyrosine mark. Threonine 177 is modified (phosphothreonine). A Phosphoserine modification is found at serine 197.

Belongs to the universal ribosomal protein uL1 family. Part of the 50S ribosomal subunit.

It is found in the plastid. The protein resides in the chloroplast. In terms of biological role, this protein binds directly to 23S ribosomal RNA. This Arabidopsis thaliana (Mouse-ear cress) protein is Large ribosomal subunit protein uL1c (RPL1).